The chain runs to 657 residues: THO complex subunit 1 (657 aa).

Position 1 is an N-acetylmethionine (methionine 1). Serine 2 is subject to Phosphoserine. Residue threonine 4 is modified to Phosphothreonine. A Glycyl lysine isopeptide (Lys-Gly) (interchain with G-Cter in SUMO2) cross-link involves residue lysine 31. Position 133 is an N6-acetyllysine (lysine 133). Positions 133–167 (KNYLLRMCNDLLRRLSKSQNTVFCGRIQLFLARLF) are dock domain; interaction with THOC2. Positions 194–221 (QESTLGQKHTEDREEGMDVEEGEMGDDE) are disordered. Acidic residues predominate over residues 206-221 (REEGMDVEEGEMGDDE). Residues 227–397 (SIPIDYNLYR…WNSWKNEGCP (171 aa)) form a dock domain; interaction with THOC2 region. Lysine 300 carries the post-translational modification N6-acetyllysine. Lysine 408 participates in a covalent cross-link: Glycyl lysine isopeptide (Lys-Gly) (interchain with G-Cter in SUMO2). Positions 414 to 430 (RKRAAPEDFLGKGPNKK) match the Nuclear localization signal motif. The interval 533–569 (LPPPSEEIKTGEDEDEEDNDALLKENESPDVRRDKPI) is disordered. Phosphoserine is present on serine 537. At threonine 542 the chain carries Phosphothreonine. Positions 553 to 569 (ALLKENESPDVRRDKPI) are enriched in basic and acidic residues. The residue at position 560 (serine 560) is a Phosphoserine. The 84-residue stretch at 570–653 (TGEQIESFAN…DLAESLTNDT (84 aa)) folds into the Death domain. Residue lysine 580 forms a Glycyl lysine isopeptide (Lys-Gly) (interchain with G-Cter in SUMO2) linkage. Residue lysine 595 forms a Glycyl lysine isopeptide (Lys-Gly) (interchain with G-Cter in SUMO1); alternate linkage. Lysine 595 is covalently cross-linked (Glycyl lysine isopeptide (Lys-Gly) (interchain with G-Cter in SUMO2); alternate).

The protein belongs to the THOC1 family. As to quaternary structure, component of the THO subcomplex, which is composed of THOC1, THOC2, THOC3, THOC5, THOC6 and THOC7. The THO subcomplex interacts with DDX39B to form the THO-DDX39B complex which multimerizes into a 28-subunit tetrameric assembly. Component of the transcription/export (TREX) complex at least composed of ALYREF/THOC4, DDX39B, SARNP/CIP29, CHTOP and the THO subcomplex; in the complex interacts with THOC2, THOC5 and THOC7. TREX seems to have a dynamic structure involving ATP-dependent remodeling. Binds to the hypophosphorylated form of RB1. Interacts with RNA polymerase II. Interacts with LUZP4. Interacts with THOC5. Expression is altered specifically during apoptosis and is accompanied by the appearance of novel forms with smaller apparent molecular mass. Post-translationally, polyubiquitinated, leading to proteasomal degradation; probably involves NEDD4. As to expression, in the inner ear, specifically expressed in inner and outer hair cells (at protein level).

It localises to the nucleus. Its subcellular location is the nucleoplasm. The protein resides in the nucleus matrix. It is found in the cytoplasm. The protein localises to the cytosol. Component of the THO subcomplex of the TREX complex which is thought to couple mRNA transcription, processing and nuclear export, and which specifically associates with spliced mRNA and not with unspliced pre-mRNA. Required for efficient export of polyadenylated RNA. The THOC1-THOC2-THOC3 core complex alone is sufficient to bind export factor NXF1-NXT1 and promote ATPase activity of DDX39B. TREX is recruited to spliced mRNAs by a transcription-independent mechanism, binds to mRNA upstream of the exon-junction complex (EJC) and is recruited in a splicing- and cap-dependent manner to a region near the 5' end of the mRNA where it functions in mRNA export to the cytoplasm via the TAP/NXF1 pathway. Regulates transcriptional elongation of a subset of genes. Involved in genome stability by preventing co-transcriptional R-loop formation. May play a role in hair cell formation, hence may be involved in hearing. Functionally, participates in an apoptotic pathway which is characterized by activation of caspase-6, increases in the expression of BAK1 and BCL2L1 and activation of NF-kappa-B. This pathway does not require p53/TP53, nor does the presence of p53/TP53 affect the efficiency of cell killing. Activates a G2/M cell cycle checkpoint prior to the onset of apoptosis. Apoptosis is inhibited by association with RB1. Essential for early embryonic development. Required for normal gene expression during postnatal testis development. The sequence is that of THO complex subunit 1 (Thoc1) from Mus musculus (Mouse).